The primary structure comprises 609 residues: Granule-bound starch synthase 1, chloroplastic/amyloplastic (609 aa).

The transit peptide at 1–77 directs the protein to the chloroplast; the sequence is MSALTTSQLA…SRRFPSVVVY (77 aa). The tract at residues 29–67 is disordered; the sequence is RHGFQGLKPRSPAGGDATSLSVTTSARATPKQQRSVQRG. The span at 46-66 shows a compositional bias: polar residues; the sequence is TSLSVTTSARATPKQQRSVQR. Position 97 (lysine 97) interacts with ADP-alpha-D-glucose. ADP-binding residues include glycine 100, arginine 408, lysine 413, lysine 462, and glutamine 493. Cysteine 337 and cysteine 529 are joined by a disulfide.

Belongs to the glycosyltransferase 1 family. Bacterial/plant glycogen synthase subfamily.

The protein localises to the plastid. It is found in the chloroplast. Its subcellular location is the amyloplast. It catalyses the reaction an NDP-alpha-D-glucose + [(1-&gt;4)-alpha-D-glucosyl](n) = [(1-&gt;4)-alpha-D-glucosyl](n+1) + a ribonucleoside 5'-diphosphate + H(+). It functions in the pathway glycan biosynthesis; starch biosynthesis. Required for the synthesis of amylose in endosperm. The sequence is that of Granule-bound starch synthase 1, chloroplastic/amyloplastic (WAXY) from Oryza sativa subsp. indica (Rice).